The chain runs to 1081 residues: MSAAPVQDKDTLSNAERAKNVNGLLQVLMDINTLNGGSSDTADKIRIHAKNFEAALFAKSSSKKEYMDSMNEKVAVMRNTYNTRKNAVTAAAANNNIKPVEQHHINNLKNSGNSANNMNVNMNLNPQMFLNQQAQARQQVAQQLRNQQQQQQQQQQQQRRQLTPQQQQLVNQMKVAPIPKQLLQRIPNIPPNINTWQQVTALAQQKLLTPQDMEAAKEVYKIHQQLLFKARLQQQQAQAQAQANNNNNGLPQNGNINNNINIPQQQQMQPPNSSANNNPLQQQSSQNTVPNVLNQINQIFSPEEQRSLLQEAIETCKNFEKTQLGSTMTEPVKQSFIRKYINQKALRKIQALRDVKNNNNANNNGSNLQRAQNVPMNIIQQQQQQNTNNNDTIATSATPNAAAFSQQQNASSKLYQMQQQQQAQAQAQAQAQAQAQAQAQAQAAQAAQAQAQAQAQAQAQAQAQAQAQAQAQAQAQAQAQAHAQHQPSQQPQQAQQQPNPLHGLTPTAKDVEVIKQLSLDASKTNLRLTDVTNSLSNEEKEKIKMKLKQGQKLFVQVSNFAPQVYIITKNENFLKEVFQLRIFVKEILEKCAEGIFVVKLDTVDRLIIKYQKYWESMRIQILRRQAILRQQQQMANNNGNPGTTSTGNNNNIATQQNMQQSLQQMQHLQQLKMQQQQQQQQQQQQQQQQQQQQQQQHIYPSSTPGVANYSAMANAPGNNIPYMNHKNTSSMDFLNSMENTPKVPVSAAATPSLNKTINGKVNGRTKSNTIPVTSIPSTNKKLSISNAASQQPTPRSASNTAKSTPNTNPSPLKTQTKNGTPNPNNMKTVQSPMGAQPSYNSAIIENAFRKEELLLKDLEIRKLEISSRFKHRQEIFKDSPMDLFMSTLGDCLGIKDEEMLTSCTIPKAVVDHINGSGKRKPTKAAQRARDQDSIDISIKDNKLVMKSKFNKSNRSYSIALSNVAAIFKGIGGNFKDLSTLVHSSSPSTSSNMDVGNPRKRKASVLEISPQDSIASVLSPDSNIMSDSKKIKVDSPDDPFMTKSGATTSEKQEVTNEAPFLTSGTSSEQFNVWDWNNWTSAT.

At S2 the chain carries N-acetylserine. The tract at residues 25-49 (LQVLMDINTLNGGSSDTADKIRIHA) is interaction with GCN4. The segment at 238-286 (QAQAQANNNNNGLPQNGNINNNINIPQQQQMQPPNSSANNNPLQQQSSQ) is disordered. Phosphoserine is present on S335. 11 consecutive repeat copies span residues 422 to 423 (QA), 424 to 425 (QA), 426 to 427 (QA), 428 to 429 (QA), 430 to 431 (QA), 432 to 433 (QA), 434 to 435 (QA), 436 to 437 (QA), 438 to 439 (QA), 440 to 441 (QA), and 442 to 443 (QA). The segment at 422–481 (QAQAQAQAQAQAQAQAQAQAQAAQAAQAQAQAQAQAQAQAQAQAQAQAQAQAQAQAQAQA) is 30 X 2 AA approximate tandem repeats of Q-A. Residues 444–445 (AQ) form a 12; approximate repeat. The 13; approximate repeat unit spans residues 446 to 447 (AA). 17 tandem repeats follow at residues 448–449 (QA), 450–451 (QA), 452–453 (QA), 454–455 (QA), 456–457 (QA), 458–459 (QA), 460–461 (QA), 462–463 (QA), 464–465 (QA), 466–467 (QA), 468–469 (QA), 470–471 (QA), 472–473 (QA), 474–475 (QA), 476–477 (QA), 478–479 (QA), and 480–481 (QA). The span at 476 to 497 (QAQAQAHAQHQPSQQPQQAQQQ) shows a compositional bias: low complexity. Disordered stretches follow at residues 476–505 (QAQA…HGLT) and 692–712 (QQQQ…YSAM). S736, S752, S783, S785, and S789 each carry phosphoserine. The segment at 744–836 (PVSAAATPSL…KTVQSPMGAQ (93 aa)) is disordered. The span at 749 to 836 (ATPSLNKTIN…KTVQSPMGAQ (88 aa)) shows a compositional bias: polar residues. Residue T793 is modified to Phosphothreonine. Phosphoserine is present on residues S831, S1003, S1008, S1018, and S1034. Residues 1026–1055 (DSKKIKVDSPDDPFMTKSGATTSEKQEVTN) are disordered.

This sequence belongs to the Mediator complex subunit 15 family. As to quaternary structure, component of the Mediator complex, which is composed of at least 21 subunits that form three structurally distinct submodules. The Mediator head module contains MED6, MED8, MED11, SRB4/MED17, SRB5/MED18, ROX3/MED19, SRB2/MED20 and SRB6/MED22, the middle module contains MED1, MED4, NUT1/MED5, MED7, CSE2/MED9, NUT2/MED10, SRB7/MED21 and SOH1/MED31, and the tail module contains MED2, PGD1/MED3, RGR1/MED14, GAL11/MED15 and SIN4/MED16. The head and the middle modules interact directly with RNA polymerase II, whereas the elongated tail module interacts with gene-specific regulatory proteins. GAL11/MED15 interacts with the activator GAL4; the interaction is direct. GAL11/MED15 interacts (via multiple regions) with the activator GCN4; the interaction is direct.

It localises to the nucleus. Functionally, component of the Mediator complex, a coactivator involved in the regulated transcription of nearly all RNA polymerase II-dependent genes. Mediator functions as a bridge to convey information from gene-specific regulatory proteins to the basal RNA polymerase II transcription machinery. The Mediator complex, having a compact conformation in its free form, is recruited to promoters by direct interactions with regulatory proteins and serves for the assembly of a functional pre-initiation complex with RNA polymerase II and the general transcription factors. The Mediator complex unfolds to an extended conformation and partially surrounds RNA polymerase II, specifically interacting with the unphosphorylated form of the C-terminal domain (CTD) of RNA polymerase II. The Mediator complex dissociates from the RNA polymerase II holoenzyme and stays at the promoter when transcriptional elongation begins. It has an important role in the negative regulation of Ty transcription. In Saccharomyces cerevisiae (strain ATCC 204508 / S288c) (Baker's yeast), this protein is Mediator of RNA polymerase II transcription subunit 15.